The chain runs to 298 residues: ATP synthase F(1) complex subunit gamma, mitochondrial (298 aa).

A mitochondrion-targeting transit peptide spans 1 to 25 (MFSRAGVAGLSAWTVQPQWIQVRNM). Lysine 39 is modified (N6-acetyllysine). Residue lysine 49 is modified to N6-succinyllysine. The residue at position 55 (lysine 55) is an N6-acetyllysine. N6-acetyllysine; alternate is present on lysine 115. Residue lysine 115 is modified to N6-succinyllysine; alternate. Serine 146 is modified (phosphoserine). N6-acetyllysine; alternate is present on lysine 154. Lysine 154 bears the N6-succinyllysine; alternate mark. Lysine 197 is subject to N6-acetyllysine. Lysine 270 is subject to N6-succinyllysine.

This sequence belongs to the ATPase gamma chain family. In terms of assembly, component of the ATP synthase complex composed at least of ATP5F1A/subunit alpha, ATP5F1B/subunit beta, ATP5MC1/subunit c (homooctomer), MT-ATP6/subunit a, MT-ATP8/subunit 8, ATP5ME/subunit e, ATP5MF/subunit f, ATP5MG/subunit g, ATP5MK/subunit k, ATP5MJ/subunit j, ATP5F1C/subunit gamma, ATP5F1D/subunit delta, ATP5F1E/subunit epsilon, ATP5PF/subunit F6, ATP5PB/subunit b, ATP5PD/subunit d, ATP5PO/subunit OSCP. ATP synthase complex consists of a soluble F(1) head domain (subunits alpha(3) and beta(3)) - the catalytic core - and a membrane F(0) domain - the membrane proton channel (subunits c, a, 8, e, f, g, k and j). These two domains are linked by a central stalk (subunits gamma, delta, and epsilon) rotating inside the F1 region and a stationary peripheral stalk (subunits F6, b, d, and OSCP). Interacts with FLVCR2; this interaction occurs in the absence of heme and is disrupted upon heme binding.

Its subcellular location is the mitochondrion inner membrane. Functionally, subunit gamma, of the mitochondrial membrane ATP synthase complex (F(1)F(0) ATP synthase or Complex V) that produces ATP from ADP in the presence of a proton gradient across the membrane which is generated by electron transport complexes of the respiratory chain. ATP synthase complex consist of a soluble F(1) head domain - the catalytic core - and a membrane F(1) domain - the membrane proton channel. These two domains are linked by a central stalk rotating inside the F(1) region and a stationary peripheral stalk. During catalysis, ATP synthesis in the catalytic domain of F(1) is coupled via a rotary mechanism of the central stalk subunits to proton translocation. In vivo, can only synthesize ATP although its ATP hydrolase activity can be activated artificially in vitro. With the central stalk subunit delta, is essential for the biogenesis of F(1) catalytic part of the ATP synthase complex namely in the formation of F1 assembly intermediate. The chain is ATP synthase F(1) complex subunit gamma, mitochondrial from Bos taurus (Bovine).